Consider the following 1094-residue polypeptide: RecBCD enzyme subunit RecB (1094 aa).

The UvrD-like helicase ATP-binding domain occupies 1–326 (MDRFELLGPL…YTLGVNWRSD (326 aa)). The tract at residues 1 to 713 (MDRFELLGPL…LLRGRRPGQS (713 aa)) is DNA-binding and helicase activity, interacts with RecC. ATP is bound at residue 21–28 (ASAGTGKT). Positions 357-613 (AGHRLASAPR…QIMTVFVAKG (257 aa)) constitute a UvrD-like helicase C-terminal domain. A nuclease activity, interacts with RecD and RecA region spans residues 775 to 1094 (TWRRTSYSDL…DLLDRGRLQS (320 aa)). Histidine 838, aspartate 975, and aspartate 989 together coordinate Mg(2+). The active-site For nuclease activity is the aspartate 989.

It belongs to the helicase family. UvrD subfamily. Heterotrimer of RecB, RecC and RecD. All subunits contribute to DNA-binding. Interacts with RecA. Mg(2+) serves as cofactor.

The catalysed reaction is Exonucleolytic cleavage (in the presence of ATP) in either 5'- to 3'- or 3'- to 5'-direction to yield 5'-phosphooligonucleotides.. The enzyme catalyses Couples ATP hydrolysis with the unwinding of duplex DNA by translocating in the 3'-5' direction.. It carries out the reaction ATP + H2O = ADP + phosphate + H(+). In terms of biological role, a helicase/nuclease that prepares dsDNA breaks (DSB) for recombinational DNA repair. Binds to DSBs and unwinds DNA via a highly rapid and processive ATP-dependent bidirectional helicase activity. In the holoenzyme this subunit contributes ATPase, 3'-5' helicase, exonuclease activity and loads RecA onto ssDNA. Unlike the case in E.coli, suppresses RecA-dependent homologous recombination, is instead required for single-strand annealing pathway repair of DSB. The chain is RecBCD enzyme subunit RecB from Mycobacterium tuberculosis (strain CDC 1551 / Oshkosh).